Reading from the N-terminus, the 121-residue chain is NAD(P)H-quinone oxidoreductase subunit M (121 aa).

The protein belongs to the complex I NdhM subunit family. As to quaternary structure, NDH-1 can be composed of about 15 different subunits; different subcomplexes with different compositions have been identified which probably have different functions.

The protein localises to the cellular thylakoid membrane. It catalyses the reaction a plastoquinone + NADH + (n+1) H(+)(in) = a plastoquinol + NAD(+) + n H(+)(out). The catalysed reaction is a plastoquinone + NADPH + (n+1) H(+)(in) = a plastoquinol + NADP(+) + n H(+)(out). Functionally, NDH-1 shuttles electrons from an unknown electron donor, via FMN and iron-sulfur (Fe-S) centers, to quinones in the respiratory and/or the photosynthetic chain. The immediate electron acceptor for the enzyme in this species is believed to be plastoquinone. Couples the redox reaction to proton translocation, and thus conserves the redox energy in a proton gradient. Cyanobacterial NDH-1 also plays a role in inorganic carbon-concentration. In Synechococcus sp. (strain JA-2-3B'a(2-13)) (Cyanobacteria bacterium Yellowstone B-Prime), this protein is NAD(P)H-quinone oxidoreductase subunit M.